The chain runs to 683 residues: DNA-directed RNA polymerase subunit beta' (683 aa).

Zn(2+) contacts are provided by cysteine 69, cysteine 71, cysteine 87, and cysteine 90. 3 residues coordinate Mg(2+): aspartate 489, aspartate 491, and aspartate 493.

This sequence belongs to the RNA polymerase beta' chain family. RpoC1 subfamily. In plastids the minimal PEP RNA polymerase catalytic core is composed of four subunits: alpha, beta, beta', and beta''. When a (nuclear-encoded) sigma factor is associated with the core the holoenzyme is formed, which can initiate transcription. Mg(2+) is required as a cofactor. Zn(2+) serves as cofactor.

It localises to the plastid. The protein localises to the chloroplast. It carries out the reaction RNA(n) + a ribonucleoside 5'-triphosphate = RNA(n+1) + diphosphate. Functionally, DNA-dependent RNA polymerase catalyzes the transcription of DNA into RNA using the four ribonucleoside triphosphates as substrates. The sequence is that of DNA-directed RNA polymerase subunit beta' from Sorghum bicolor (Sorghum).